Consider the following 346-residue polypeptide: Glucose-6-phosphatase 3 (346 aa).

The Lumenal portion of the chain corresponds to 1 to 24 (MESTLGAGIVIAEALQNQLAWLEN). The helical transmembrane segment at 25–45 (VWLWITFLGDPKILFLFYFPA) threads the bilayer. Over 46–54 (AYYASRRVG) the chain is Cytoplasmic. Residues 55 to 75 (IAVLWISLITEWLNLIFKWFL) traverse the membrane as a helical segment. Over 76–114 (FGDRPFWWVHESGYYSQAPAQVHQFPSSCETGPGSPSGH) the chain is Lumenal. Arginine 79 provides a ligand contact to substrate. The Proton donor role is filled by histidine 114. A helical membrane pass occupies residues 115 to 135 (CMITGAALWPIMTALSSQVAT). Residues 136–146 (RARSRWVRVMP) are Cytoplasmic-facing. Residues 147–164 (SLAYCTFLLAVGLSRIFI) form a helical membrane-spanning segment. Arginine 161 is a binding site for substrate. Topologically, residues 165–169 (LAHFP) are lumenal. Histidine 167 serves as the catalytic Nucleophile. Residues 170–186 (HQVLAGLITGAVLGWLM) form a helical membrane-spanning segment. The Cytoplasmic portion of the chain corresponds to 187–197 (TPRVPMERELS). Residues 198–218 (FYGLTALALMLGTSLIYWTLF) traverse the membrane as a helical segment. The Lumenal segment spans residues 219–254 (TLGLDLSWSISLAFKWCERPEWIHVDSRPFASLSRD). Residues 255-273 (SGAALGLGIALHSPCYAQV) form a helical membrane-spanning segment. Residues 274–283 (RRAQLGNGQK) are Cytoplasmic-facing. Residues 284 to 304 (IACLVLAMGLLGPLDWLGHPP) form a helical membrane-spanning segment. The Lumenal portion of the chain corresponds to 305-307 (QIS). The helical transmembrane segment at 308 to 328 (LFYIFNFLKYTLWPCLVLALV) threads the bilayer. Over 329-346 (PWAVHMFSAQEAPPIHSS) the chain is Cytoplasmic.

Belongs to the glucose-6-phosphatase family. Ubiquitously expressed. Highly expressed in skeletal muscle, at intermediate levels in heart, brain, placenta, kidney, colon, thymus, spleen and pancreas. Also detected in testis, prostate, ovary, liver, lung, small intestine and peripheral blood lymphocytes.

The protein resides in the endoplasmic reticulum membrane. The catalysed reaction is D-glucose 6-phosphate + H2O = D-glucose + phosphate. The protein operates within carbohydrate biosynthesis; gluconeogenesis. Inhibited by vanadate. Hydrolyzes glucose-6-phosphate to glucose in the endoplasmic reticulum. May form with the glucose-6-phosphate transporter (SLC37A4/G6PT) a ubiquitously expressed complex responsible for glucose production through glycogenolysis and gluconeogenesis. Probably required for normal neutrophil function. This Homo sapiens (Human) protein is Glucose-6-phosphatase 3 (G6PC3).